Here is a 101-residue protein sequence, read N- to C-terminus: Aspartyl/glutamyl-tRNA(Asn/Gln) amidotransferase subunit C (101 aa).

This sequence belongs to the GatC family. In terms of assembly, heterotrimer of A, B and C subunits.

It carries out the reaction L-glutamyl-tRNA(Gln) + L-glutamine + ATP + H2O = L-glutaminyl-tRNA(Gln) + L-glutamate + ADP + phosphate + H(+). The enzyme catalyses L-aspartyl-tRNA(Asn) + L-glutamine + ATP + H2O = L-asparaginyl-tRNA(Asn) + L-glutamate + ADP + phosphate + 2 H(+). Functionally, allows the formation of correctly charged Asn-tRNA(Asn) or Gln-tRNA(Gln) through the transamidation of misacylated Asp-tRNA(Asn) or Glu-tRNA(Gln) in organisms which lack either or both of asparaginyl-tRNA or glutaminyl-tRNA synthetases. The reaction takes place in the presence of glutamine and ATP through an activated phospho-Asp-tRNA(Asn) or phospho-Glu-tRNA(Gln). This is Aspartyl/glutamyl-tRNA(Asn/Gln) amidotransferase subunit C from Salinispora tropica (strain ATCC BAA-916 / DSM 44818 / JCM 13857 / NBRC 105044 / CNB-440).